Reading from the N-terminus, the 501-residue chain is 2,3-bisphosphoglycerate-independent phosphoglycerate mutase (501 aa).

The Mn(2+) site is built by D12 and S62. S62 serves as the catalytic Phosphoserine intermediate. Substrate is bound by residues H121, 150-151 (RD), R182, R188, 253-256 (RSDR), and K323. 5 residues coordinate Mn(2+): D390, H394, D431, H432, and H450.

It belongs to the BPG-independent phosphoglycerate mutase family. As to quaternary structure, monomer. The cofactor is Mn(2+).

The enzyme catalyses (2R)-2-phosphoglycerate = (2R)-3-phosphoglycerate. Its pathway is carbohydrate degradation; glycolysis; pyruvate from D-glyceraldehyde 3-phosphate: step 3/5. Catalyzes the interconversion of 2-phosphoglycerate and 3-phosphoglycerate. This chain is 2,3-bisphosphoglycerate-independent phosphoglycerate mutase, found in Ehrlichia canis (strain Jake).